Consider the following 134-residue polypeptide: Profilin-2 (134 aa).

An intrachain disulfide couples Cys13 to Cys118. An Involved in PIP2 interaction motif is present at residues 84-100; it reads AVIRGKKGSGGITIKKT. Thr114 carries the post-translational modification Phosphothreonine.

This sequence belongs to the profilin family. Occurs in many kinds of cells as a complex with monomeric actin in a 1:1 ratio. In terms of processing, phosphorylated by MAP kinases.

It is found in the cytoplasm. It localises to the cytoskeleton. Functionally, binds to actin and affects the structure of the cytoskeleton. At high concentrations, profilin prevents the polymerization of actin, whereas it enhances it at low concentrations. In Olea europaea (Common olive), this protein is Profilin-2.